A 307-amino-acid chain; its full sequence is Acyl transferase (307 aa).

Residues S116, D213, and H243 each act as charge relay system in the active site.

Belongs to the LuxD family.

It participates in lipid metabolism; fatty acid reduction for biolumincescence. Acyl transferase is part of the fatty acid reductase system required for aldehyde biosynthesis; it produces fatty acids for the luminescent reaction. The sequence is that of Acyl transferase from Aliivibrio fischeri (strain MJ11) (Vibrio fischeri).